The sequence spans 113 residues: T cell receptor alpha variable 8-3 (113 aa).

The signal sequence occupies residues 1–20; it reads MLLELIPLLGIHFVLRTARA. The 93-residue stretch at 21–113 folds into the Ig-like domain; sequence QSVTQPDIHI…DAAEYFCAVG (93 aa). C42 and C110 are disulfide-bonded. N43 carries an N-linked (GlcNAc...) asparagine glycan.

In terms of assembly, alpha-beta TR is a heterodimer composed of an alpha and beta chain; disulfide-linked. The alpha-beta TR is associated with the transmembrane signaling CD3 coreceptor proteins to form the TR-CD3 (TcR or TCR). The assembly of alpha-beta TR heterodimers with CD3 occurs in the endoplasmic reticulum where a single alpha-beta TR heterodimer associates with one CD3D-CD3E heterodimer, one CD3G-CD3E heterodimer and one CD247 homodimer forming a stable octameric structure. CD3D-CD3E and CD3G-CD3E heterodimers preferentially associate with TR alpha and TR beta chains, respectively. The association of the CD247 homodimer is the last step of TcR assembly in the endoplasmic reticulum and is required for transport to the cell surface.

The protein localises to the cell membrane. Functionally, v region of the variable domain of T cell receptor (TR) alpha chain that participates in the antigen recognition. Alpha-beta T cell receptors are antigen specific receptors which are essential to the immune response and are present on the cell surface of T lymphocytes. Recognize peptide-major histocompatibility (MH) (pMH) complexes that are displayed by antigen presenting cells (APC), a prerequisite for efficient T cell adaptive immunity against pathogens. Binding of alpha-beta TR to pMH complex initiates TR-CD3 clustering on the cell surface and intracellular activation of LCK that phosphorylates the ITAM motifs of CD3G, CD3D, CD3E and CD247 enabling the recruitment of ZAP70. In turn ZAP70 phosphorylates LAT, which recruits numerous signaling molecules to form the LAT signalosome. The LAT signalosome propagates signal branching to three major signaling pathways, the calcium, the mitogen-activated protein kinase (MAPK) kinase and the nuclear factor NF-kappa-B (NF-kB) pathways, leading to the mobilization of transcription factors that are critical for gene expression and essential for T cell growth and differentiation. The T cell repertoire is generated in the thymus, by V-(D)-J rearrangement. This repertoire is then shaped by intrathymic selection events to generate a peripheral T cell pool of self-MH restricted, non-autoaggressive T cells. Post-thymic interaction of alpha-beta TR with the pMH complexes shapes TR structural and functional avidity. This Homo sapiens (Human) protein is T cell receptor alpha variable 8-3.